The primary structure comprises 142 residues: MATKIDKEACRAAYNLVRDDGSSVIWVTFKYDGATIVPGDQGADYQHFIQQCTDDVRLFAFVRFTTGDAMSKRSKFALITWIGEDVSGLQRAKTGTDKTLVKEVVQNFAKEFVISDRKELEEDFIRSELKKAGGANYDAQSE.

N-acetylalanine is present on Ala2. In terms of domain architecture, ADF-H spans 2 to 130 (ATKIDKEACR…EEDFIRSELK (129 aa)). The residue at position 23 (Ser23) is a Phosphoserine. Positions 66 to 75 (TGDAMSKRSK) are flexible and important for F-actin binding. N6-acetyllysine is present on Lys102. Ser141 bears the Phosphoserine mark.

It belongs to the actin-binding proteins ADF family. Coactosin subfamily. Interacts with 5-lipoxygenase (ALOX5/5LO) in a calcium-independent manner. Binds to F-actin with a stoichiometry of 1:2.

Its subcellular location is the cytoplasm. It is found in the cytoskeleton. The protein resides in the nucleus. In terms of biological role, binds to F-actin in a calcium-independent manner. Has no direct effect on actin depolymerization. Acts as a chaperone for ALOX5 (5LO), influencing both its stability and activity in leukotrienes synthesis. The polypeptide is Coactosin-like protein (Rattus norvegicus (Rat)).